The chain runs to 487 residues: Glutamate--tRNA ligase (487 aa).

Positions 11-21 (PSPTGYPHLGN) match the 'HIGH' region motif. Zn(2+) contacts are provided by C108, C110, C135, and D137. The 'KMSKS' region signature appears at 245-249 (KLSKR). K248 lines the ATP pocket.

The protein belongs to the class-I aminoacyl-tRNA synthetase family. Glutamate--tRNA ligase type 1 subfamily. In terms of assembly, monomer. It depends on Zn(2+) as a cofactor.

It is found in the cytoplasm. The enzyme catalyses tRNA(Glu) + L-glutamate + ATP = L-glutamyl-tRNA(Glu) + AMP + diphosphate. Functionally, catalyzes the attachment of glutamate to tRNA(Glu) in a two-step reaction: glutamate is first activated by ATP to form Glu-AMP and then transferred to the acceptor end of tRNA(Glu). The sequence is that of Glutamate--tRNA ligase from Dehalococcoides mccartyi (strain ATCC BAA-2100 / JCM 16839 / KCTC 5957 / BAV1).